Consider the following 128-residue polypeptide: Small ribosomal subunit protein uS11m (128 aa).

Belongs to the universal ribosomal protein uS11 family.

It is found in the mitochondrion. In Prototheca wickerhamii, this protein is Small ribosomal subunit protein uS11m (RPS11).